The chain runs to 159 residues: Voltage-dependent N-type calcium channel subunit alpha-1B (159 aa).

A helical membrane pass occupies residues Leu1 to Ile5. Residues Leu1–Ile159 form an IV repeat. At Ala6–Asn13 the chain is on the extracellular side. N-linked (GlcNAc...) asparagine glycosylation is present at Asn13. Residues Leu14–Gly32 traverse the membrane as a helical segment. The Cytoplasmic segment spans residues Tyr33–Tyr51. Residues Val52–Phe71 traverse the membrane as a helical segment. Over Gly72–Phe135 the chain is Extracellular. Residues Ala136 to Phe155 traverse the membrane as a helical segment. Residues Val156–Ile159 are Cytoplasmic-facing.

This sequence belongs to the calcium channel alpha-1 subunit (TC 1.A.1.11) family. CACNA1B subfamily. As to quaternary structure, multisubunit complex consisting of alpha-1, alpha-2, beta and delta subunits in a 1:1:1:1 ratio. The channel activity is directed by the pore-forming and voltage-sensitive alpha-1 subunit. In many cases, this subunit is sufficient to generate voltage-sensitive calcium channel activity. The auxiliary subunits beta and alpha-2/delta linked by a disulfide bridge regulate the channel activity. Interacts with RIMBP2. Phosphorylated in vitro by CaM-kinase II, PKA, PKC and CGPK.

It localises to the membrane. The catalysed reaction is Ca(2+)(in) = Ca(2+)(out). In terms of biological role, voltage-sensitive calcium channels (VSCC) mediate the entry of calcium ions into excitable cells and are also involved in a variety of calcium-dependent processes, including muscle contraction, hormone or neurotransmitter release, gene expression, cell motility, cell division and cell death. This alpha-1B subunit gives rise to N-type calcium currents. N-type calcium channels belong to the 'high-voltage activated' (HVA) group. They are involved in pain signaling. Calcium channels containing alpha-1B subunit may play a role in directed migration of immature neurons. Mediates Ca(2+) release probability at hippocampal neuronal soma and synaptic terminals. The polypeptide is Voltage-dependent N-type calcium channel subunit alpha-1B (CACNA1B) (Gallus gallus (Chicken)).